Consider the following 312-residue polypeptide: uncharacterized protein (312 aa).

This sequence belongs to the asfivirus CP312R family.

The protein resides in the virion. This is an uncharacterized protein from African swine fever virus (isolate Tick/South Africa/Pretoriuskop Pr4/1996) (ASFV).